The sequence spans 377 residues: Chaperone protein DnaJ (377 aa).

The region spanning 5–70 (DYYEILGVAK…QKRAAYDQFG (66 aa)) is the J domain. The segment at 130–208 (GTEVKIRVPS…CHGQGRVEEH (79 aa)) adopts a CR-type zinc-finger fold. Residues cysteine 143, cysteine 146, cysteine 160, cysteine 163, cysteine 182, cysteine 185, cysteine 196, and cysteine 199 each contribute to the Zn(2+) site. 4 CXXCXGXG motif repeats span residues 143–150 (CGECHGSG), 160–167 (CGTCGGVG), 182–189 (CPRCHGTG), and 196–203 (CKACHGQG).

It belongs to the DnaJ family. As to quaternary structure, homodimer. It depends on Zn(2+) as a cofactor.

It is found in the cytoplasm. In terms of biological role, participates actively in the response to hyperosmotic and heat shock by preventing the aggregation of stress-denatured proteins and by disaggregating proteins, also in an autonomous, DnaK-independent fashion. Unfolded proteins bind initially to DnaJ; upon interaction with the DnaJ-bound protein, DnaK hydrolyzes its bound ATP, resulting in the formation of a stable complex. GrpE releases ADP from DnaK; ATP binding to DnaK triggers the release of the substrate protein, thus completing the reaction cycle. Several rounds of ATP-dependent interactions between DnaJ, DnaK and GrpE are required for fully efficient folding. Also involved, together with DnaK and GrpE, in the DNA replication of plasmids through activation of initiation proteins. The polypeptide is Chaperone protein DnaJ (Thioalkalivibrio sulfidiphilus (strain HL-EbGR7)).